Consider the following 514-residue polypeptide: MMSAAICTLLAVIATTSLGLLFLSIIRRGKLPPGPPPKPIVGNLHQFPKVNRAQVFDQWHRTYGPIVGLRLGLKKLILVGSYQVARELLDRRGAIYSSRPRVVMAGEIANRGNHTALMPYGPKWKLHNRVHSALMNPTMVKRYQYLQDIESRQLVHDLLQGSTSDFGARIHRYSSSLLFALAYGRRLPTSDAFEIQENAHIAHQFINNLAAGRWLVDAFPVLNYLPTWLAPWKKIGEQLYQRKFGLLQRHTALALEKPVWNWTKHFHGPKKPAEASWEELLNIIGVLYEAGADTTTSALEAFVMAAVLHPDAVRRVQAEIDALVGGAARMPSFEDVQQLPFVDAFVNETMRWRPIAPEGVPHSLMKEDEYEGFTIPKNSIVIANQWHMAMDPATFTDPQAFRPERWLEDPKLPISAFGFGRRACPGRHIALNSMKIVMCRLLWAYDFDHAYENGRKVTIDPDNFVREGVLSKPAPFKAALRVRSPAHEKTIQSALRESEQDEDKILAHIAAGLA.

The chain crosses the membrane as a helical span at residues 6–26; the sequence is ICTLLAVIATTSLGLLFLSII. N-linked (GlcNAc...) asparagine glycosylation is found at N113, N261, and N347. A heme-binding site is contributed by C424.

It belongs to the cytochrome P450 family. Heme is required as a cofactor.

Its subcellular location is the membrane. It catalyses the reaction asperaculane D + reduced [NADPH--hemoprotein reductase] + O2 = asperaculane E + oxidized [NADPH--hemoprotein reductase] + H2O + H(+). It participates in secondary metabolite biosynthesis. In terms of biological role, cytochrome P450 monooxygenase; part of the gene cluster that mediates the biosynthesis of aculenes, a unique type of norsesquiterpenes that contain a nordaucane skeleton linked to an L-proline moiety and are of mixed biosynthetic origin. The pathway begins with the synthesis of dauca-4,7-diene by the terpene cyclase aneC using farnesyl pyrophosphate (FPP) as substrate. The cytochrome P450 monooxygenase aneF then performs the initial oxidation at C-12 of dauca-4,7-diene to yield asperaculane D. Asperaculane D is substrate of the cytochrome P450 monooxygenase aneD for C-10 hydroxylation to yield asperaculane E. The cytochrome P450 monooxygenase aneG then converts asperaculane E into aculene D via C-2 oxidation. The monomodular nonribosomal peptide synthtase aneB adenylates L-proline and the thiohydrolase aneE transfers this activated L-proline derivative to aculenes D and C to produce respectively aculenes B and A. The dioxygenase aneA converts aculene D into aculene C, and aculene B into aculene A by introducing the 5,6-alkene moiety. Asperculanes A, B, C and F, as well as 14-prolyl asperculane C, might be shunt products of the pathway. In Aspergillus aculeatus (strain ATCC 16872 / CBS 172.66 / WB 5094), this protein is Cytochrome P450 monooxygenase aneD.